Here is a 60-residue protein sequence, read N- to C-terminus: Sec-independent protein translocase protein TatA (60 aa).

Residues Met1 to Phe21 form a helical membrane-spanning segment.

The protein belongs to the TatA/E family. Forms a complex with TatC.

The protein resides in the cell membrane. Its function is as follows. Part of the twin-arginine translocation (Tat) system that transports large folded proteins containing a characteristic twin-arginine motif in their signal peptide across membranes. TatA could form the protein-conducting channel of the Tat system. In Anoxybacillus flavithermus (strain DSM 21510 / WK1), this protein is Sec-independent protein translocase protein TatA.